We begin with the raw amino-acid sequence, 121 residues long: Basic phospholipase A2 homolog 2 (121 aa).

7 disulfide bridges follow: Cys26–Cys115, Cys28–Cys44, Cys43–Cys95, Cys49–Cys121, Cys50–Cys88, Cys57–Cys81, and Cys75–Cys86. The tract at residues 105–117 is important for membrane-damaging activities in eukaryotes and bacteria; heparin-binding; the sequence is KKYRYHLKPLCKK.

Belongs to the phospholipase A2 family. Group II subfamily. K49 sub-subfamily. In terms of assembly, homodimer; non-covalently linked (probable alternative/compact dimer conformation in solution). As to expression, expressed by the venom gland.

It localises to the secreted. In terms of biological role, snake venom phospholipase A2 homolog that lacks enzymatic activity. Is myotoxic and displays edema-inducing activities in mouse paw. Also displays cytotoxic activity against myotubes. A model of myotoxic mechanism has been proposed: an apo Lys49-PLA2 is activated by the entrance of a hydrophobic molecule (e.g. fatty acid) at the hydrophobic channel of the protein leading to a reorientation of a monomer. This reorientation causes a transition between 'inactive' to 'active' states, causing alignment of C-terminal and membrane-docking sites (MDoS) side-by-side and putting the membrane-disruption sites (MDiS) in the same plane, exposed to solvent and in a symmetric position for both monomers. The MDoS region stabilizes the toxin on membrane by the interaction of charged residues with phospholipid head groups. Subsequently, the MDiS region destabilizes the membrane with penetration of hydrophobic residues. This insertion causes a disorganization of the membrane, allowing an uncontrolled influx of ions (i.e. calcium and sodium), and eventually triggering irreversible intracellular alterations and cell death. This is Basic phospholipase A2 homolog 2 from Bothrops brazili (Brazil's lancehead).